The primary structure comprises 652 residues: NADH-ubiquinone oxidoreductase chain 5 (652 aa).

16 consecutive transmembrane segments (helical) span residues 1–21, 30–50, 72–92, 119–139, 140–160, 177–197, 200–220, 241–261, 274–294, 301–319, 331–351, 365–385, 403–423, 454–474, 505–525, and 619–639; these read MYLS…FLGR, LITC…FIEV, IIWG…VLII, LFTF…MFVG, WEGV…RIAA, FLTI…YSTV, LAPY…LIGA, TPVS…YLLM, LLLC…IGLF, VIAY…AIGL, NHAF…HAVA, FLPL…AFPF, FSFS…FTTL, LFLT…GFIT, FAVP…FSII, and LYIL…FNFL.

Belongs to the complex I subunit 5 family.

Its subcellular location is the mitochondrion inner membrane. It carries out the reaction a ubiquinone + NADH + 5 H(+)(in) = a ubiquinol + NAD(+) + 4 H(+)(out). Its function is as follows. Core subunit of the mitochondrial membrane respiratory chain NADH dehydrogenase (Complex I) that is believed to belong to the minimal assembly required for catalysis. Complex I functions in the transfer of electrons from NADH to the respiratory chain. The immediate electron acceptor for the enzyme is believed to be ubiquinone. This chain is NADH-ubiquinone oxidoreductase chain 5 (ND5), found in Podospora anserina (strain S / ATCC MYA-4624 / DSM 980 / FGSC 10383) (Pleurage anserina).